A 478-amino-acid chain; its full sequence is Glycogen synthase (478 aa).

K15 serves as a coordination point for ADP-alpha-D-glucose.

This sequence belongs to the glycosyltransferase 1 family. Bacterial/plant glycogen synthase subfamily.

It carries out the reaction [(1-&gt;4)-alpha-D-glucosyl](n) + ADP-alpha-D-glucose = [(1-&gt;4)-alpha-D-glucosyl](n+1) + ADP + H(+). The protein operates within glycan biosynthesis; glycogen biosynthesis. Functionally, synthesizes alpha-1,4-glucan chains using ADP-glucose. The protein is Glycogen synthase of Streptococcus uberis (strain ATCC BAA-854 / 0140J).